The chain runs to 90 residues: Small ribosomal subunit protein uS17 (90 aa).

This sequence belongs to the universal ribosomal protein uS17 family. As to quaternary structure, part of the 30S ribosomal subunit.

One of the primary rRNA binding proteins, it binds specifically to the 5'-end of 16S ribosomal RNA. This chain is Small ribosomal subunit protein uS17, found in Gluconobacter oxydans (strain 621H) (Gluconobacter suboxydans).